The chain runs to 746 residues: MLGDSRDLFRPKTSDIPAKPGVYKWRDGEGRVIYVGKAKNLRNRLTNYFQPLYLLHPRTQTMVLTARSLEWTVVATELESLTLEYTWIKEFDPRFNVQFRDDKTYPYLAVSTGERIPRVWVTRSRKRRDTRYFGPYAKVWELRHSLDRLLRTFPVRTCTTNVFHKAQLTGRPCLFASIGKCSAPCVNRIEADEHRRLCEQLVGVMTGRLGRPYIAQLTRDMKEASAELEFEKAARLRDQIQMLETVVQQNAVVFDQDVDADVFGFASDELEASVHAFYVRAGSIRGERNWSVERVEDIDDADLMADLLVQVYSDAAGDNHPQSAATISTNREAIGSTQTITATDAVARAQATRERNTRQETTGRADLLAPIAPVPREIIVPVEPARREELEGWLTNLRGGAVTIRVASRGDKKQLMDRANENASQALQRSKMSRISDMGARTQAMNDVAKALGLAEAPLRIECYDISNTVGGAFQVASMVVFEDAIAKKSEYRRFAIRGKDGKGAVDDLSALYETLTRRFKHGNIAGDSGESIDAEQRVASAAGKMTTAVAAETIAANGNDNGEGGSDISGKGHAVPVGVQNDARESPPDIVQQNTNRHHFAYKPNLVVVDGGKPQVMAAAKALEDCGVNDVAVCGLAKRLEEVWVPDDDYPIILKRQSEGMYLLQRVRDESHRFAITYHRQQRRKGALRSALDEIPGIGESYQKRLLNHFGSVKAMREASVEDFEKVKGIGHAKAEALYTALHEQ.

Residues Ala18–Val97 enclose the GIY-YIG domain. The region spanning Arg211–Val246 is the UVR domain. The disordered stretch occupies residues Ala557–Pro577.

The protein belongs to the UvrC family. Interacts with UvrB in an incision complex.

It localises to the cytoplasm. The UvrABC repair system catalyzes the recognition and processing of DNA lesions. UvrC both incises the 5' and 3' sides of the lesion. The N-terminal half is responsible for the 3' incision and the C-terminal half is responsible for the 5' incision. The polypeptide is UvrABC system protein C (Bifidobacterium longum (strain DJO10A)).